Reading from the N-terminus, the 308-residue chain is 4-hydroxy-tetrahydrodipicolinate synthase (308 aa).

Position 53 (Thr53) interacts with pyruvate. Tyr141 serves as the catalytic Proton donor/acceptor. Lys169 (schiff-base intermediate with substrate) is an active-site residue. Position 209 (Val209) interacts with pyruvate.

The protein belongs to the DapA family. Homotetramer; dimer of dimers.

It is found in the cytoplasm. It catalyses the reaction L-aspartate 4-semialdehyde + pyruvate = (2S,4S)-4-hydroxy-2,3,4,5-tetrahydrodipicolinate + H2O + H(+). The protein operates within amino-acid biosynthesis; L-lysine biosynthesis via DAP pathway; (S)-tetrahydrodipicolinate from L-aspartate: step 3/4. Catalyzes the condensation of (S)-aspartate-beta-semialdehyde [(S)-ASA] and pyruvate to 4-hydroxy-tetrahydrodipicolinate (HTPA). This is 4-hydroxy-tetrahydrodipicolinate synthase from Acidothermus cellulolyticus (strain ATCC 43068 / DSM 8971 / 11B).